The chain runs to 691 residues: Elongation factor G (691 aa).

The 275-residue stretch at 8–282 (HMVRNIGIAA…AVVDYLPAPD (275 aa)) folds into the tr-type G domain. GTP-binding positions include 17–24 (AHIDAGKT), 81–85 (DTPGH), and 135–138 (NKMD).

Belongs to the TRAFAC class translation factor GTPase superfamily. Classic translation factor GTPase family. EF-G/EF-2 subfamily.

Its subcellular location is the cytoplasm. In terms of biological role, catalyzes the GTP-dependent ribosomal translocation step during translation elongation. During this step, the ribosome changes from the pre-translocational (PRE) to the post-translocational (POST) state as the newly formed A-site-bound peptidyl-tRNA and P-site-bound deacylated tRNA move to the P and E sites, respectively. Catalyzes the coordinated movement of the two tRNA molecules, the mRNA and conformational changes in the ribosome. The sequence is that of Elongation factor G from Campylobacter hominis (strain ATCC BAA-381 / DSM 21671 / CCUG 45161 / LMG 19568 / NCTC 13146 / CH001A).